We begin with the raw amino-acid sequence, 338 residues long: Cytoskeleton protein RodZ (338 aa).

The Cytoplasmic portion of the chain corresponds to 1-111; the sequence is MNTEASQDQT…LGKKHKKRDG (111 aa). The HTH cro/C1-type domain occupies 19-79; sequence LRQAREALGL…KLVHLPEDEL (61 aa). Residues 30 to 49 constitute a DNA-binding region (H-T-H motif); sequence QQMVAERLCLKVSTIRDIEE. A helical; Signal-anchor for type II membrane protein membrane pass occupies residues 112–132; it reads WLMSFTWLIVLVVLGLTGAWW. At 133–338 the chain is on the periplasmic side; it reads WQNHQAQQAE…RVARLTVGVE (206 aa). 2 stretches are compositionally biased toward polar residues: residues 151-163 and 180-195; these read SAQL…QSVP and PVAN…NGTV. The segment at 151–253 is disordered; the sequence is SAQLSQNGGQ…LPTADAGVTG (103 aa). Residues 196 to 209 show a composition bias toward low complexity; sequence PATSSAAPADTANN. The segment covering 210–241 has biased composition (polar residues); the sequence is GVNTTAPQGTTSAESAVVSPSQAPLPSVSTAQ.

This sequence belongs to the RodZ family.

Its subcellular location is the cell inner membrane. Functionally, cytoskeletal protein that is involved in cell-shape control through regulation of the length of the long axis. This chain is Cytoskeleton protein RodZ, found in Yersinia enterocolitica serotype O:8 / biotype 1B (strain NCTC 13174 / 8081).